Consider the following 838-residue polypeptide: Kinesin-like protein KIFC2 (838 aa).

Low complexity predominate over residues 23-32 (AAAAEPGDPA). 2 disordered regions span residues 23–48 (AAAA…DLPA) and 140–185 (LLQG…GQQP). A compositionally biased stretch (polar residues) spans 156–167 (DGSTSQEESPSH). Positions 186 to 351 (LQLEEDQRAW…SLRQGCGDLR (166 aa)) form a coiled coil. The Kinesin motor domain occupies 409 to 740 (NIRVLCRLRP…ARRSPRGRRI (332 aa)). 484–491 (GQTGTGKT) lines the ATP pocket. The tract at residues 718 to 792 (RSPPTRARPP…SPGPPAPLRR (75 aa)) is disordered.

This sequence belongs to the TRAFAC class myosin-kinesin ATPase superfamily. Kinesin family.

The protein resides in the cytoplasm. It localises to the cytoskeleton. Functionally, may play a role in microtubule-dependent retrograde axonal transport. May function as the motor for the transport of multivesicular body (MVB)-like organelles in dendrites. This is Kinesin-like protein KIFC2 (KIFC2) from Homo sapiens (Human).